The sequence spans 360 residues: Phospho-N-acetylmuramoyl-pentapeptide-transferase (360 aa).

The next 10 helical transmembrane spans lie at 25–45 (RGILGVLTALILALCLGPWMI), 73–93 (TMGGALILSAIAISTLLWADL), 97–117 (YVWTVLAVTLLFGAIGWVDDY), 132–152 (WKYFWQSVFGLGAALFLYMTA), 167–187 (TIEIPLGAAFIVLTYFVIVGS), 199–219 (GLAIMPTVMVGGALGIFCYLS), 236–256 (AGELIVFCGALIGAGLGFLWF), 263–283 (VFMGDVGALALGAALGTIAVI), 288–308 (VVLFIMGGVFVMETLSVMIQV), and 338–358 (VIVRFWIITVVLVLIGLATLK).

The protein belongs to the glycosyltransferase 4 family. MraY subfamily. Mg(2+) serves as cofactor.

The protein resides in the cell inner membrane. It catalyses the reaction UDP-N-acetyl-alpha-D-muramoyl-L-alanyl-gamma-D-glutamyl-meso-2,6-diaminopimeloyl-D-alanyl-D-alanine + di-trans,octa-cis-undecaprenyl phosphate = di-trans,octa-cis-undecaprenyl diphospho-N-acetyl-alpha-D-muramoyl-L-alanyl-D-glutamyl-meso-2,6-diaminopimeloyl-D-alanyl-D-alanine + UMP. The protein operates within cell wall biogenesis; peptidoglycan biosynthesis. Catalyzes the initial step of the lipid cycle reactions in the biosynthesis of the cell wall peptidoglycan: transfers peptidoglycan precursor phospho-MurNAc-pentapeptide from UDP-MurNAc-pentapeptide onto the lipid carrier undecaprenyl phosphate, yielding undecaprenyl-pyrophosphoryl-MurNAc-pentapeptide, known as lipid I. This chain is Phospho-N-acetylmuramoyl-pentapeptide-transferase, found in Azotobacter vinelandii (strain DJ / ATCC BAA-1303).